Consider the following 164-residue polypeptide: NADH-quinone oxidoreductase subunit C (164 aa).

This sequence belongs to the complex I 30 kDa subunit family. In terms of assembly, NDH-1 is composed of 14 different subunits. Subunits NuoB, C, D, E, F, and G constitute the peripheral sector of the complex.

The protein localises to the cell inner membrane. It catalyses the reaction a quinone + NADH + 5 H(+)(in) = a quinol + NAD(+) + 4 H(+)(out). Functionally, NDH-1 shuttles electrons from NADH, via FMN and iron-sulfur (Fe-S) centers, to quinones in the respiratory chain. The immediate electron acceptor for the enzyme in this species is believed to be ubiquinone. Couples the redox reaction to proton translocation (for every two electrons transferred, four hydrogen ions are translocated across the cytoplasmic membrane), and thus conserves the redox energy in a proton gradient. The sequence is that of NADH-quinone oxidoreductase subunit C from Geotalea uraniireducens (strain Rf4) (Geobacter uraniireducens).